The sequence spans 260 residues: Flagellar basal-body rod protein FlgG (260 aa).

This sequence belongs to the flagella basal body rod proteins family. As to quaternary structure, the basal body constitutes a major portion of the flagellar organelle and consists of four rings (L,P,S, and M) mounted on a central rod. The rod consists of about 26 subunits of FlgG in the distal portion, and FlgB, FlgC and FlgF are thought to build up the proximal portion of the rod with about 6 subunits each.

The protein localises to the bacterial flagellum basal body. The sequence is that of Flagellar basal-body rod protein FlgG (flgG) from Salmonella typhi.